The chain runs to 1593 residues: DNA-directed RNA polymerase subunit beta' (1593 aa).

4 residues coordinate Zn(2+): cysteine 74, cysteine 76, cysteine 89, and cysteine 92. Residues aspartate 648, aspartate 650, and aspartate 652 each contribute to the Mg(2+) site. Zn(2+)-binding residues include cysteine 1026, cysteine 1100, cysteine 1107, and cysteine 1110.

This sequence belongs to the RNA polymerase beta' chain family. As to quaternary structure, the RNAP catalytic core consists of 2 alpha, 1 beta, 1 beta' and 1 omega subunit. When a sigma factor is associated with the core the holoenzyme is formed, which can initiate transcription. Requires Mg(2+) as cofactor. Zn(2+) serves as cofactor.

It catalyses the reaction RNA(n) + a ribonucleoside 5'-triphosphate = RNA(n+1) + diphosphate. DNA-dependent RNA polymerase catalyzes the transcription of DNA into RNA using the four ribonucleoside triphosphates as substrates. This Endomicrobium trichonymphae protein is DNA-directed RNA polymerase subunit beta'.